The following is a 438-amino-acid chain: Serine hydroxymethyltransferase (438 aa).

Residues Leu-135 and 139 to 141 contribute to the (6S)-5,6,7,8-tetrahydrofolate site; that span reads GHL. N6-(pyridoxal phosphate)lysine is present on Lys-244. The disordered stretch occupies residues 361-383; sequence GVPNDPLPPVKTSGIRVGSPAGT.

The protein belongs to the SHMT family. In terms of assembly, homodimer. Pyridoxal 5'-phosphate is required as a cofactor.

The protein localises to the cytoplasm. It catalyses the reaction (6R)-5,10-methylene-5,6,7,8-tetrahydrofolate + glycine + H2O = (6S)-5,6,7,8-tetrahydrofolate + L-serine. It participates in one-carbon metabolism; tetrahydrofolate interconversion. Its pathway is amino-acid biosynthesis; glycine biosynthesis; glycine from L-serine: step 1/1. Functionally, catalyzes the reversible interconversion of serine and glycine with tetrahydrofolate (THF) serving as the one-carbon carrier. This reaction serves as the major source of one-carbon groups required for the biosynthesis of purines, thymidylate, methionine, and other important biomolecules. Also exhibits THF-independent aldolase activity toward beta-hydroxyamino acids, producing glycine and aldehydes, via a retro-aldol mechanism. This chain is Serine hydroxymethyltransferase, found in Rhizorhabdus wittichii (strain DSM 6014 / CCUG 31198 / JCM 15750 / NBRC 105917 / EY 4224 / RW1) (Sphingomonas wittichii).